A 352-amino-acid polypeptide reads, in one-letter code: Uroporphyrinogen decarboxylase (352 aa).

Substrate contacts are provided by residues 27–31, D77, Y154, T209, and H325; that span reads RQAGR.

Belongs to the uroporphyrinogen decarboxylase family. As to quaternary structure, homodimer.

The protein localises to the cytoplasm. It catalyses the reaction uroporphyrinogen III + 4 H(+) = coproporphyrinogen III + 4 CO2. It functions in the pathway porphyrin-containing compound metabolism; protoporphyrin-IX biosynthesis; coproporphyrinogen-III from 5-aminolevulinate: step 4/4. Catalyzes the decarboxylation of four acetate groups of uroporphyrinogen-III to yield coproporphyrinogen-III. This is Uroporphyrinogen decarboxylase from Legionella pneumophila (strain Paris).